Reading from the N-terminus, the 201-residue chain is MSLFAIFYLFLAYLLGSVSSAILLCRLAGLPDPRESGSHNPGATNVLRIGGRWVALSVLLFDMLKGMLPVWLGYYLGLTHFELGMVALGACLGHIFPIFFKFKGGKGVATAFGAIAPISWGVAGSMLGTWLLIFFVSGYSSLSAVMTALLVPFYVWWFKPEFTFPVALVCCLLIYRHHDNIQRLWRGQEDKVWNKLKNKKD.

The next 5 helical transmembrane spans lie at 3 to 23 (LFAI…SAIL), 53 to 73 (WVAL…VWLG), 80 to 100 (HFEL…PIFF), 115 to 135 (IAPI…LIFF), and 153 to 175 (FYVW…LLIY).

The protein belongs to the PlsY family. As to quaternary structure, probably interacts with PlsX.

Its subcellular location is the cell inner membrane. The enzyme catalyses an acyl phosphate + sn-glycerol 3-phosphate = a 1-acyl-sn-glycero-3-phosphate + phosphate. Its pathway is lipid metabolism; phospholipid metabolism. Catalyzes the transfer of an acyl group from acyl-phosphate (acyl-PO(4)) to glycerol-3-phosphate (G3P) to form lysophosphatidic acid (LPA). This enzyme utilizes acyl-phosphate as fatty acyl donor, but not acyl-CoA or acyl-ACP. The polypeptide is Glycerol-3-phosphate acyltransferase (Pasteurella multocida (strain Pm70)).